Reading from the N-terminus, the 46-residue chain is Iota-conotoxin-like M11.1 (46 aa).

4 disulfide bridges follow: Cys-5-Cys-19, Cys-12-Cys-22, Cys-18-Cys-27, and Cys-21-Cys-38. A D-methionine modification is found at Met-44. Arg-46 is a propeptide (removed by a carboxypeptidase).

Belongs to the conotoxin I1 superfamily. As to expression, expressed by the venom duct.

The protein localises to the secreted. Iota-conotoxins bind to voltage-gated sodium channels (Nav) and act as agonists by shifting the voltage-dependence of activation to more hyperpolarized levels. Produces general excitatory symptoms. The sequence is that of Iota-conotoxin-like M11.1 from Conus magus (Magical cone).